The primary structure comprises 654 residues: tRNA 5-methylaminomethyl-2-thiouridine biosynthesis bifunctional protein MnmC (654 aa).

The segment at 1 to 236 is tRNA (mnm(5)s(2)U34)-methyltransferase; the sequence is MTDRIVPATL…KRAMLVGEFA (236 aa). An FAD-dependent cmnm(5)s(2)U34 oxidoreductase region spans residues 260–654; that stretch reads IGAGLAGCAA…IRALRRGRVA (395 aa).

In the N-terminal section; belongs to the methyltransferase superfamily. tRNA (mnm(5)s(2)U34)-methyltransferase family. The protein in the C-terminal section; belongs to the DAO family. FAD serves as cofactor.

The protein localises to the cytoplasm. The enzyme catalyses 5-aminomethyl-2-thiouridine(34) in tRNA + S-adenosyl-L-methionine = 5-methylaminomethyl-2-thiouridine(34) in tRNA + S-adenosyl-L-homocysteine + H(+). In terms of biological role, catalyzes the last two steps in the biosynthesis of 5-methylaminomethyl-2-thiouridine (mnm(5)s(2)U) at the wobble position (U34) in tRNA. Catalyzes the FAD-dependent demodification of cmnm(5)s(2)U34 to nm(5)s(2)U34, followed by the transfer of a methyl group from S-adenosyl-L-methionine to nm(5)s(2)U34, to form mnm(5)s(2)U34. The sequence is that of tRNA 5-methylaminomethyl-2-thiouridine biosynthesis bifunctional protein MnmC from Burkholderia thailandensis (strain ATCC 700388 / DSM 13276 / CCUG 48851 / CIP 106301 / E264).